A 393-amino-acid chain; its full sequence is Bifunctional enzyme Fae/Hps (393 aa).

A formaldehyde-activating enzyme region spans residues 1–161; that stretch reads MYQIGEALVG…YEKDRGAHAV (161 aa). The active-site Proton donor is His17. Positions 19, 48, 66, 68, and 83 each coordinate substrate. Positions 162-393 are 3-hexulose-6-phosphate synthase; that stretch reads MGFKVQRLWD…IDQFRVMTDF (232 aa).

In the N-terminal section; belongs to the formaldehyde-activating enzyme family. The protein in the C-terminal section; belongs to the HPS/KGPDC family. HPS subfamily.

It carries out the reaction 5,6,7,8-tetrahydromethanopterin + formaldehyde = 5,10-methylenetetrahydromethanopterin + H2O. It catalyses the reaction D-ribulose 5-phosphate + formaldehyde = D-arabino-hex-3-ulose 6-phosphate. The protein operates within carbohydrate biosynthesis; D-ribose 5-phosphate biosynthesis. In terms of biological role, catalyzes the condensation of formaldehyde with tetrahydromethanopterin (H(4)MPT) to 5,10-methylenetetrahydromethanopterin. Functionally, catalyzes the reversible formation of ribulose-5-phosphate and formaldehyde from 3-hexulose-6-phosphate. The chain is Bifunctional enzyme Fae/Hps from Methanosphaerula palustris (strain ATCC BAA-1556 / DSM 19958 / E1-9c).